The sequence spans 151 residues: UPF0178 protein mma_0312 (151 aa).

This sequence belongs to the UPF0178 family.

The sequence is that of UPF0178 protein mma_0312 from Janthinobacterium sp. (strain Marseille) (Minibacterium massiliensis).